The following is a 151-amino-acid chain: UPF0756 membrane protein Aflv_0503 (151 aa).

The next 4 helical transmembrane spans lie at 4 to 24 (FIFLFILLVIGMMAKNQSLII), 52 to 72 (LGVTIITIAVLVPIATGKIGF), 85 to 105 (WIAMLSGIAVALLAKGGVALL), and 115 to 135 (LVLGTILAVSLFKGVAVGPLI).

This sequence belongs to the UPF0756 family.

It is found in the cell membrane. This Anoxybacillus flavithermus (strain DSM 21510 / WK1) protein is UPF0756 membrane protein Aflv_0503.